Here is a 74-residue protein sequence, read N- to C-terminus: Cytochrome b (74 aa).

Residues Phe-34 to Met-54 traverse the membrane as a helical segment.

Belongs to the cytochrome b family. The cytochrome bc1 complex contains 11 subunits: 3 respiratory subunits (MT-CYB, CYC1 and UQCRFS1), 2 core proteins (UQCRC1 and UQCRC2) and 6 low-molecular weight proteins (UQCRH/QCR6, UQCRB/QCR7, UQCRQ/QCR8, UQCR10/QCR9, UQCR11/QCR10 and a cleavage product of UQCRFS1). This cytochrome bc1 complex then forms a dimer. Heme serves as cofactor.

The protein resides in the mitochondrion inner membrane. Its function is as follows. Component of the ubiquinol-cytochrome c reductase complex (complex III or cytochrome b-c1 complex) that is part of the mitochondrial respiratory chain. The b-c1 complex mediates electron transfer from ubiquinol to cytochrome c. Contributes to the generation of a proton gradient across the mitochondrial membrane that is then used for ATP synthesis. This chain is Cytochrome b (MT-CYB), found in Anser caerulescens (Snow goose).